We begin with the raw amino-acid sequence, 148 residues long: Large ribosomal subunit protein bL9 (148 aa).

The protein belongs to the bacterial ribosomal protein bL9 family.

In terms of biological role, binds to the 23S rRNA. The chain is Large ribosomal subunit protein bL9 from Pseudomonas fluorescens (strain SBW25).